The primary structure comprises 54 residues: Phorbol-12-myristate-13-acetate-induced protein 1 (54 aa).

The BH3 motif lies at 29–37 (LRRFGDKLN). A required for mitochondrial location region spans residues 41–50 (KLLNLISKLF).

The protein belongs to the PMAIP1 family. Interacts with MCL1. Interacts with BCL2A1. Interacts with BAX. Interacts with BCL2L10. In terms of tissue distribution, highly expressed in adult T-cell leukemia cell line.

It localises to the mitochondrion. Its function is as follows. Promotes activation of caspases and apoptosis. Promotes mitochondrial membrane changes and efflux of apoptogenic proteins from the mitochondria. Contributes to p53/TP53-dependent apoptosis after radiation exposure. Promotes proteasomal degradation of MCL1. Competes with BAK1 for binding to MCL1 and can displace BAK1 from its binding site on MCL1. Competes with BIM/BCL2L11 for binding to MCL1 and can displace BIM/BCL2L11 from its binding site on MCL1. This chain is Phorbol-12-myristate-13-acetate-induced protein 1 (PMAIP1), found in Homo sapiens (Human).